A 751-amino-acid chain; its full sequence is Glutathione biosynthesis bifunctional protein GshAB (751 aa).

The tract at residues 1–336 (MELDAVGKAI…QADQLTRQVL (336 aa)) is glutamate--cysteine ligase.

It in the N-terminal section; belongs to the glutamate--cysteine ligase type 1 family. Type 2 subfamily. Monomer.

The enzyme catalyses L-cysteine + L-glutamate + ATP = gamma-L-glutamyl-L-cysteine + ADP + phosphate + H(+). It carries out the reaction gamma-L-glutamyl-L-cysteine + glycine + ATP = glutathione + ADP + phosphate + H(+). The protein operates within sulfur metabolism; glutathione biosynthesis; glutathione from L-cysteine and L-glutamate: step 1/2. Its pathway is sulfur metabolism; glutathione biosynthesis; glutathione from L-cysteine and L-glutamate: step 2/2. Functionally, synthesizes glutathione from L-glutamate and L-cysteine via gamma-L-glutamyl-L-cysteine. The polypeptide is Glutathione biosynthesis bifunctional protein GshAB (gshAB) (Lactiplantibacillus plantarum (strain ATCC BAA-793 / NCIMB 8826 / WCFS1) (Lactobacillus plantarum)).